Consider the following 343-residue polypeptide: Holliday junction branch migration complex subunit RuvB (343 aa).

Residues 1 to 182 (MRDELLNTPT…FGISNRLDYY (182 aa)) are large ATPase domain (RuvB-L). Residues Ile-21, Arg-22, Gly-63, Lys-66, Thr-67, Thr-68, 129–131 (EDF), Arg-172, Tyr-182, and Arg-219 contribute to the ATP site. A Mg(2+)-binding site is contributed by Thr-67. The interval 183–253 (SAELLQRIII…LARKTLAALE (71 aa)) is small ATPAse domain (RuvB-S). Positions 256–343 (EDGLDDMDKK…DGPLFQKGSS (88 aa)) are head domain (RuvB-H). DNA is bound by residues Arg-311 and Arg-316.

It belongs to the RuvB family. As to quaternary structure, homohexamer. Forms an RuvA(8)-RuvB(12)-Holliday junction (HJ) complex. HJ DNA is sandwiched between 2 RuvA tetramers; dsDNA enters through RuvA and exits via RuvB. An RuvB hexamer assembles on each DNA strand where it exits the tetramer. Each RuvB hexamer is contacted by two RuvA subunits (via domain III) on 2 adjacent RuvB subunits; this complex drives branch migration. In the full resolvosome a probable DNA-RuvA(4)-RuvB(12)-RuvC(2) complex forms which resolves the HJ.

It localises to the cytoplasm. It catalyses the reaction ATP + H2O = ADP + phosphate + H(+). Its function is as follows. The RuvA-RuvB-RuvC complex processes Holliday junction (HJ) DNA during genetic recombination and DNA repair, while the RuvA-RuvB complex plays an important role in the rescue of blocked DNA replication forks via replication fork reversal (RFR). RuvA specifically binds to HJ cruciform DNA, conferring on it an open structure. The RuvB hexamer acts as an ATP-dependent pump, pulling dsDNA into and through the RuvAB complex. RuvB forms 2 homohexamers on either side of HJ DNA bound by 1 or 2 RuvA tetramers; 4 subunits per hexamer contact DNA at a time. Coordinated motions by a converter formed by DNA-disengaged RuvB subunits stimulates ATP hydrolysis and nucleotide exchange. Immobilization of the converter enables RuvB to convert the ATP-contained energy into a lever motion, pulling 2 nucleotides of DNA out of the RuvA tetramer per ATP hydrolyzed, thus driving DNA branch migration. The RuvB motors rotate together with the DNA substrate, which together with the progressing nucleotide cycle form the mechanistic basis for DNA recombination by continuous HJ branch migration. Branch migration allows RuvC to scan DNA until it finds its consensus sequence, where it cleaves and resolves cruciform DNA. In Prosthecochloris aestuarii (strain DSM 271 / SK 413), this protein is Holliday junction branch migration complex subunit RuvB.